We begin with the raw amino-acid sequence, 297 residues long: Aspartate carbamoyltransferase catalytic subunit (297 aa).

Arginine 49 and threonine 50 together coordinate carbamoyl phosphate. An L-aspartate-binding site is contributed by lysine 77. The carbamoyl phosphate site is built by arginine 99, histidine 129, and glutamine 132. The L-aspartate site is built by arginine 162 and arginine 215. Carbamoyl phosphate-binding residues include glycine 256 and proline 257.

Belongs to the aspartate/ornithine carbamoyltransferase superfamily. ATCase family. Heterododecamer (2C3:3R2) of six catalytic PyrB chains organized as two trimers (C3), and six regulatory PyrI chains organized as three dimers (R2).

The enzyme catalyses carbamoyl phosphate + L-aspartate = N-carbamoyl-L-aspartate + phosphate + H(+). It participates in pyrimidine metabolism; UMP biosynthesis via de novo pathway; (S)-dihydroorotate from bicarbonate: step 2/3. Catalyzes the condensation of carbamoyl phosphate and aspartate to form carbamoyl aspartate and inorganic phosphate, the committed step in the de novo pyrimidine nucleotide biosynthesis pathway. The protein is Aspartate carbamoyltransferase catalytic subunit of Legionella pneumophila subsp. pneumophila (strain Philadelphia 1 / ATCC 33152 / DSM 7513).